The chain runs to 269 residues: Putative biopolymer transport protein ExbD (269 aa).

At 1-40 (MASSPKAPKSHRKFQSIYHPTRPLSLWQDNQHDQGEVRIE) the chain is on the cytoplasmic side. The helical transmembrane segment at 41–61 (IIPLIDVVFCILTFFILGAVG) threads the bilayer. Over 62–269 (LSRQQAISLD…GNTVPSAPQQ (208 aa)) the chain is Periplasmic. Positions 190 to 269 (NGANPGMSNF…GNTVPSAPQQ (80 aa)) are disordered. Low complexity predominate over residues 193-204 (NPGMSNFNNSNP).

The protein belongs to the ExbD/TolR family.

The protein localises to the cell inner membrane. The protein is Putative biopolymer transport protein ExbD of Synechocystis sp. (strain ATCC 27184 / PCC 6803 / Kazusa).